The sequence spans 286 residues: 3-hydroxyanthranilate 3,4-dioxygenase (286 aa).

A domain A (catalytic) region spans residues 1–160 (MERRLGVRAW…SEQYRTGKPI (160 aa)). Position 43 (Arg-43) interacts with O2. Fe cation-binding residues include His-47, Glu-53, and His-91. Glu-53 is a substrate binding site. 2 residues coordinate substrate: Arg-95 and Glu-105. Residues 161 to 177 (PDQLLKEPPFPLSTRSI) form a linker region. The domain B stretch occupies residues 178 to 286 (MEPMSLDAWL…QDPACKKPLG (109 aa)).

This sequence belongs to the 3-HAO family. In terms of assembly, monomer. It depends on Fe(2+) as a cofactor.

It localises to the cytoplasm. The protein localises to the cytosol. The catalysed reaction is 3-hydroxyanthranilate + O2 = (2Z,4Z)-2-amino-3-carboxymuconate 6-semialdehyde. Its pathway is cofactor biosynthesis; NAD(+) biosynthesis; quinolinate from L-kynurenine: step 3/3. In terms of biological role, catalyzes the oxidative ring opening of 3-hydroxyanthranilate to 2-amino-3-carboxymuconate semialdehyde, which spontaneously cyclizes to quinolinate. The polypeptide is 3-hydroxyanthranilate 3,4-dioxygenase (Homo sapiens (Human)).